A 127-amino-acid polypeptide reads, in one-letter code: Large ribosomal subunit protein bL20 (127 aa).

It belongs to the bacterial ribosomal protein bL20 family.

Functionally, binds directly to 23S ribosomal RNA and is necessary for the in vitro assembly process of the 50S ribosomal subunit. It is not involved in the protein synthesizing functions of that subunit. This chain is Large ribosomal subunit protein bL20, found in Renibacterium salmoninarum (strain ATCC 33209 / DSM 20767 / JCM 11484 / NBRC 15589 / NCIMB 2235).